The sequence spans 1614 residues: Adenylate cyclase type 10 (1614 aa).

2 consecutive Guanylate cyclase domains span residues 42 to 179 and 293 to 418; these read VLMF…RLAQ and TIVF…ARMM. Mg(2+) is bound by residues aspartate 47 and isoleucine 48. 47-52 is a binding site for ATP; the sequence is DISGFT. Lysine 95 lines the hydrogencarbonate pocket. Aspartate 99 contributes to the Mg(2+) binding site. ATP is bound by residues aspartate 99 and lysine 144. 3 residues coordinate hydrogencarbonate: valine 167, arginine 176, and methionine 337. ATP-binding positions include valine 406 and 412–416; that span reads NIAAR.

Belongs to the adenylyl cyclase class-4/guanylyl cyclase family. It depends on Mg(2+) as a cofactor. The cofactor is Mn(2+). As to expression, expressed in testis.

The protein localises to the cell membrane. The protein resides in the cytoplasm. Its subcellular location is the cytoskeleton. It is found in the perinuclear region. It localises to the nucleus. The protein localises to the cell projection. The protein resides in the cilium. Its subcellular location is the mitochondrion. It carries out the reaction ATP = 3',5'-cyclic AMP + diphosphate. With respect to regulation, activated by manganese or magnesium ions. In the presence of magnesium ions, the enzyme is activated by bicarbonate. Calcium mildly increases the enzyme activity, also in the presence of magnesium ions. Catalyzes the formation of the signaling molecule cAMP. May function as sensor that mediates responses to changes in cellular bicarbonate and CO(2) levels. Has a critical role in mammalian spermatogenesis by producing the cAMP which regulates cAMP-responsive nuclear factors indispensable for sperm maturation in the epididymis. Induces capacitation, the maturational process that sperm undergo prior to fertilization. Involved in ciliary beat regulation. This chain is Adenylate cyclase type 10 (Adcy10), found in Mus musculus (Mouse).